Reading from the N-terminus, the 1072-residue chain is Carbamoyl phosphate synthase large chain (1072 aa).

A carboxyphosphate synthetic domain region spans residues 1–401; the sequence is MPKYKDINKV…SLLKAVRSLE (401 aa). 12 residues coordinate ATP: arginine 129, arginine 169, glycine 175, glycine 176, lysine 208, leucine 210, glutamate 215, glycine 241, valine 242, histidine 243, glutamine 284, and glutamate 298. The region spanning 133–327 is the ATP-grasp 1 domain; sequence KRKMQEIGEP…IAKVAAKIAI (195 aa). Mg(2+) contacts are provided by glutamine 284, glutamate 298, and asparagine 300. Residues glutamine 284, glutamate 298, and asparagine 300 each contribute to the Mn(2+) site. An oligomerization domain region spans residues 402 to 544; the sequence is IKAYGLRLNN…YIYSTYGEED (143 aa). The tract at residues 545 to 929 is carbamoyl phosphate synthetic domain; that stretch reads EVEIHEIPKV…ALYKALEGAG (385 aa). The region spanning 671–861 is the ATP-grasp 2 domain; that stretch reads SKLLKELNIN…MVKLAVEVAL (191 aa). The ATP site is built by arginine 707, lysine 746, isoleucine 748, glutamate 752, glycine 777, valine 778, histidine 779, serine 780, glutamine 820, and glutamate 832. Positions 820, 832, and 834 each coordinate Mg(2+). The Mn(2+) site is built by glutamine 820, glutamate 832, and asparagine 834. The MGS-like domain maps to 930–1072; that stretch reads LKIPKKGKIL…QKDNVKNLVL (143 aa). The interval 930–1072 is allosteric domain; that stretch reads LKIPKKGKIL…QKDNVKNLVL (143 aa).

It belongs to the CarB family. In terms of assembly, composed of two chains; the small (or glutamine) chain promotes the hydrolysis of glutamine to ammonia, which is used by the large (or ammonia) chain to synthesize carbamoyl phosphate. Tetramer of heterodimers (alpha,beta)4. Mg(2+) serves as cofactor. Mn(2+) is required as a cofactor.

The enzyme catalyses hydrogencarbonate + L-glutamine + 2 ATP + H2O = carbamoyl phosphate + L-glutamate + 2 ADP + phosphate + 2 H(+). It catalyses the reaction hydrogencarbonate + NH4(+) + 2 ATP = carbamoyl phosphate + 2 ADP + phosphate + 2 H(+). It participates in amino-acid biosynthesis; L-arginine biosynthesis; carbamoyl phosphate from bicarbonate: step 1/1. Its pathway is pyrimidine metabolism; UMP biosynthesis via de novo pathway; (S)-dihydroorotate from bicarbonate: step 1/3. Functionally, large subunit of the glutamine-dependent carbamoyl phosphate synthetase (CPSase). CPSase catalyzes the formation of carbamoyl phosphate from the ammonia moiety of glutamine, carbonate, and phosphate donated by ATP, constituting the first step of 2 biosynthetic pathways, one leading to arginine and/or urea and the other to pyrimidine nucleotides. The large subunit (synthetase) binds the substrates ammonia (free or transferred from glutamine from the small subunit), hydrogencarbonate and ATP and carries out an ATP-coupled ligase reaction, activating hydrogencarbonate by forming carboxy phosphate which reacts with ammonia to form carbamoyl phosphate. The chain is Carbamoyl phosphate synthase large chain from Thermoanaerobacter sp. (strain X514).